The sequence spans 226 residues: uncharacterized protein (226 aa).

Positions 1–18 are cleaved as a signal peptide; it reads MRRIGLCISLLVTVLVMS.

This is an uncharacterized protein from Bacillus subtilis (strain 168).